Consider the following 266-residue polypeptide: Metallo-beta-lactamase VIM-2 (266 aa).

The first 20 residues, 1–20 (MFKLLSKLLVYLTASIMAIA), serve as a signal peptide directing secretion. Zn(2+)-binding residues include His114, His116, and Cys198.

The protein belongs to the metallo-beta-lactamase superfamily. Class-B beta-lactamase family. In terms of assembly, monomer. Zn(2+) is required as a cofactor.

Its subcellular location is the periplasm. The catalysed reaction is a beta-lactam + H2O = a substituted beta-amino acid. Its activity is regulated as follows. Inhibited by chelating agents such as EDTA. Inhibited by a fungal natural product, aspergillomarasmine A (AMA). Inhibited by 2-triazolylthioacetamides. Functionally, class B beta-lactamase which confers resistance to the beta-lactam antibiotics, including penicillins, cephalosporins and carbapenems. Acts via hydrolysis of the beta-lactam ring. Has penicillin-, cephalosporin- and carbapenem-hydrolyzing activities. This is Metallo-beta-lactamase VIM-2 from Escherichia coli.